Reading from the N-terminus, the 116-residue chain is Nucleoid-associated protein A9601_00191 (116 aa).

It belongs to the YbaB/EbfC family. As to quaternary structure, homodimer.

It is found in the cytoplasm. The protein localises to the nucleoid. Functionally, binds to DNA and alters its conformation. May be involved in regulation of gene expression, nucleoid organization and DNA protection. This is Nucleoid-associated protein A9601_00191 from Prochlorococcus marinus (strain AS9601).